A 312-amino-acid polypeptide reads, in one-letter code: Apolipoprotein E (312 aa).

Positions 1 to 18 (MKALWALLLVPLLTGCLA) are cleaved as a signal peptide. 8 tandem repeats follow at residues 72-93 (VLME…EQLG), 94-115 (PVAE…ARLG), 116-137 (ADME…TMLG), 138-159 (QSTE…KRLM), 160-181 (RDAD…EGAE), 182-203 (RGVS…QRTA), 204-225 (NLGS…DRIR), and 226-247 (GRLE…DQME). Residues 72–247 (VLMEDTMTEV…RLEEVRDQME (176 aa)) are 8 X 22 AA approximate tandem repeats. Methionine sulfoxide is present on Met-135. A Phosphoserine modification is found at Ser-139. Residues 150-160 (HLRKMRKRLMR) are LDL and other lipoprotein receptors binding. An LDL receptor binding region spans residues 150 to 160 (HLRKMRKRLMR). 154–157 (MRKR) is a binding site for heparin. Residues 202–282 (TANLGSGAAQ…GWFEPLVEDM (81 aa)) are lipid-binding and lipoprotein association. 221–228 (SDRIRGRL) is a heparin binding site. Residues 258–312 (QQIRLQAEVFQARLKGWFEPLVEDMQRQWANLMEKIQASVATNSIASTTVPLENQ) are homooligomerization. The specificity for association with VLDL stretch occupies residues 270-282 (RLKGWFEPLVEDM).

It belongs to the apolipoprotein A1/A4/E family. In terms of assembly, homotetramer. May interact with ABCA1; functionally associated with ABCA1 in the biogenesis of HDLs. May interact with APP/A4 amyloid-beta peptide; the interaction is extremely stable in vitro but its physiological significance is unclear. May interact with MAPT. May interact with MAP2. In the cerebrospinal fluid, interacts with secreted SORL1. Interacts with PMEL; this allows the loading of PMEL luminal fragment on ILVs to induce fibril nucleation. Post-translationally, APOE exists as multiple glycosylated and sialylated glycoforms within cells and in plasma. The extent of glycosylation and sialylation are tissue and context specific. Glycated in plasma VLDL. In terms of processing, phosphorylated by FAM20C in the extracellular medium.

It is found in the secreted. Its subcellular location is the extracellular space. The protein localises to the extracellular matrix. The protein resides in the extracellular vesicle. It localises to the endosome. It is found in the multivesicular body. Functionally, APOE is an apolipoprotein, a protein associating with lipid particles, that mainly functions in lipoprotein-mediated lipid transport between organs via the plasma and interstitial fluids. APOE is a core component of plasma lipoproteins and is involved in their production, conversion and clearance. Apolipoproteins are amphipathic molecules that interact both with lipids of the lipoprotein particle core and the aqueous environment of the plasma. As such, APOE associates with chylomicrons, chylomicron remnants, very low density lipoproteins (VLDL) and intermediate density lipoproteins (IDL) but shows a preferential binding to high-density lipoproteins (HDL). It also binds a wide range of cellular receptors including the LDL receptor/LDLR, the LDL receptor-related proteins LRP1, LRP2 and LRP8 and the very low-density lipoprotein receptor/VLDLR that mediate the cellular uptake of the APOE-containing lipoprotein particles. Finally, APOE also has a heparin-binding activity and binds heparan-sulfate proteoglycans on the surface of cells, a property that supports the capture and the receptor-mediated uptake of APOE-containing lipoproteins by cells. A main function of APOE is to mediate lipoprotein clearance through the uptake of chylomicrons, VLDLs, and HDLs by hepatocytes. APOE is also involved in the biosynthesis by the liver of VLDLs as well as their uptake by peripheral tissues ensuring the delivery of triglycerides and energy storage in muscle, heart and adipose tissues. By participating in the lipoprotein-mediated distribution of lipids among tissues, APOE plays a critical role in plasma and tissues lipid homeostasis. APOE is also involved in two steps of reverse cholesterol transport, the HDLs-mediated transport of cholesterol from peripheral tissues to the liver, and thereby plays an important role in cholesterol homeostasis. First, it is functionally associated with ABCA1 in the biogenesis of HDLs in tissues. Second, it is enriched in circulating HDLs and mediates their uptake by hepatocytes. APOE also plays an important role in lipid transport in the central nervous system, regulating neuron survival and sprouting. In Rattus rattus (Black rat), this protein is Apolipoprotein E (Apoe).